Consider the following 59-residue polypeptide: Amyloid-beta precursor protein (59 aa).

The Extracellular segment spans residues 1–34 (ISEVKMDAEFRHDSGYEVHHQKLVFFAEDVGSNK). A helical transmembrane segment spans residues 35–58 (GAIIGLMVGGVVIATVIVITLVML). Lys-59 is a topological domain (cytoplasmic).

The protein belongs to the APP family. As to quaternary structure, binds, via its C-terminus, to the PID domain of several cytoplasmic proteins, including APBB family members, the APBA family, MAPK8IP1, SHC1 and NUMB and DAB1. Binding to DAB1 inhibits its serine phosphorylation. Interacts (via NPXY motif) with DAB2 (via PID domain); the interaction is impaired by tyrosine phosphorylation of the NPXY motif. Also interacts with GPCR-like protein BPP, APPBP1, IB1, KNS2 (via its TPR domains), APPBP2 (via BaSS) and DDB1. In vitro, it binds MAPT via the MT-binding domains. Associates with microtubules in the presence of ATP and in a kinesin-dependent manner. Interacts, through a C-terminal domain, with GNAO1. Interacts with CPEB1, ANKS1B and AGER. Interacts with ITM2B. Interacts with ITM2C. Interacts with IDE. Can form homodimers; dimerization is enhanced in the presence of Cu(2+) ions. Can form homodimers; this is promoted by heparin binding. Interacts with SORL1 (via N-terminal ectodomain); this interaction retains APP in the trans-Golgi network and reduces processing into soluble APP-alpha and amyloid-beta peptides. Interacts with PLD3. Interacts with VDAC1. Interacts with NSG1; could regulate APP processing. Amyloid-beta protein 42 interacts with FPR2. Interacts with LRRK2. Interacts (via cytoplasmic domain) with KIF5B. Interacts (via C-terminus) with APBB2/FE65L1 (via C-terminus). Interacts (via intracellular domain) with APBB3. In terms of processing, proteolytically processed under normal cellular conditions. Cleavage either by alpha-secretase, beta-secretase or theta-secretase leads to generation and extracellular release of soluble APP peptides, S-APP-alpha and S-APP-beta, and the retention of corresponding membrane-anchored C-terminal fragments, C80, C83 and C99. Subsequent processing of C80 and C83 by gamma-secretase yields P3 peptides. This is the major secretory pathway and is non-amyloidogenic. Alternatively, presenilin/nicastrin-mediated gamma-secretase processing of C99 releases the amyloid-beta proteins, amyloid-beta protein 40 and amyloid-beta protein 42, major components of amyloid plaques, and the cytotoxic C-terminal fragments, gamma-CTF(50), gamma-CTF(57) and gamma-CTF(59). PSEN1 cleavage is more efficient with C83 than with C99 as substrate (in vitro). Amyloid-beta protein 40 and Amyloid-beta protein 42 are cleaved by ACE. Many other minor amyloid-beta peptides, amyloid-beta 1-X peptides, are found in cerebral spinal fluid (CSF) including the amyloid-beta X-15 peptides, produced from the cleavage by alpha-secretase.

It localises to the cell membrane. It is found in the membrane. The protein resides in the perikaryon. The protein localises to the cell projection. Its subcellular location is the growth cone. It localises to the clathrin-coated pit. It is found in the early endosome. The protein resides in the cytoplasmic vesicle. The protein localises to the secreted. Its subcellular location is the cell surface. It localises to the nucleus. It is found in the cytoplasm. Functions as a cell surface receptor and performs physiological functions on the surface of neurons relevant to neurite growth, neuronal adhesion and axonogenesis. Interaction between APP molecules on neighboring cells promotes synaptogenesis. Involved in cell mobility and transcription regulation through protein-protein interactions. Can promote transcription activation through binding to APBB1-KAT5 and inhibit Notch signaling through interaction with Numb. Couples to apoptosis-inducing pathways such as those mediated by G(o) and JIP. Inhibits G(o)-alpha ATPase activity. Acts as a kinesin I membrane receptor, mediating the axonal transport of beta-secretase and presenilin 1. By acting as a kinesin I membrane receptor, plays a role in axonal anterograde transport of cargo towards synapses in axons. May be involved in copper homeostasis/oxidative stress through copper ion reduction. In vitro, copper-metallated APP induces neuronal death directly or is potentiated through Cu(2+)-mediated low-density lipoprotein oxidation. Can regulate neurite outgrowth through binding to components of the extracellular matrix such as heparin and collagen I and IV. Induces a AGER-dependent pathway that involves activation of p38 MAPK, resulting in internalization of amyloid-beta peptide and mitochondrial dysfunction in cultured cortical neurons. Provides Cu(2+) ions for GPC1 which are required for release of nitric oxide (NO) and subsequent degradation of the heparan sulfate chains on GPC1. The protein is Amyloid-beta precursor protein (APP) of Bos taurus (Bovine).